A 331-amino-acid polypeptide reads, in one-letter code: Mucin-15 (331 aa).

Residues 1–22 (MLTLAKIALISSLFISLPFARP) form the signal peptide. Residues 23–233 (QKQNPRRNVT…SDTPKENKNT (211 aa)) lie on the Extracellular side of the membrane. N-linked (GlcNAc...) asparagine glycans are attached at residues N30, N44, N54, N59, N75, N84, N120, N136, N145, N152, N215, and N222. Residues 124 to 162 (ADANPLQVSEHSNSTNSPSPENFTWSLDNDTMNSPEDIS) show a composition bias toward polar residues. Residues 124 to 186 (ADANPLQVSE…VTPFTAEPTE (63 aa)) form a disordered region. Residues 234-254 (GIVFGAILGAILGASLLSLVG) form a helical membrane-spanning segment. At 255–331 (YLLCGQRKTD…DAIPPLRPSI (77 aa)) the chain is on the cytoplasmic side. Residues 302 to 331 (AVSDSSMPEGGESLQDGIPMDAIPPLRPSI) are disordered.

Highly glycosylated (N- and O-linked carbohydrates).

The protein resides in the membrane. This is Mucin-15 (Muc15) from Mus musculus (Mouse).